We begin with the raw amino-acid sequence, 443 residues long: Thymidine phosphorylase (443 aa).

It belongs to the thymidine/pyrimidine-nucleoside phosphorylase family. In terms of assembly, homodimer.

It catalyses the reaction thymidine + phosphate = 2-deoxy-alpha-D-ribose 1-phosphate + thymine. It participates in pyrimidine metabolism; dTMP biosynthesis via salvage pathway; dTMP from thymine: step 1/2. Functionally, the enzymes which catalyze the reversible phosphorolysis of pyrimidine nucleosides are involved in the degradation of these compounds and in their utilization as carbon and energy sources, or in the rescue of pyrimidine bases for nucleotide synthesis. The protein is Thymidine phosphorylase of Shewanella baltica (strain OS223).